Here is a 31-residue protein sequence, read N- to C-terminus: Cytochrome b6-f complex subunit 8 (31 aa).

Residues 5 to 25 (IVSMAWAALMVVFTFSLSLVI) traverse the membrane as a helical segment.

It belongs to the PetN family. The 4 large subunits of the cytochrome b6-f complex are cytochrome b6, subunit IV (17 kDa polypeptide, PetD), cytochrome f and the Rieske protein, while the 4 small subunits are PetG, PetL, PetM and PetN. The complex functions as a dimer.

The protein localises to the plastid membrane. Functionally, component of the cytochrome b6-f complex, which mediates electron transfer between photosystem II (PSII) and photosystem I (PSI), cyclic electron flow around PSI, and state transitions. In Cuscuta gronovii (Common dodder), this protein is Cytochrome b6-f complex subunit 8.